Consider the following 372-residue polypeptide: Flagellar P-ring protein (372 aa).

A signal peptide spans 1–26; sequence MNLSSLSFRLLATLLGACVVVAPASA.

Belongs to the FlgI family. In terms of assembly, the basal body constitutes a major portion of the flagellar organelle and consists of four rings (L,P,S, and M) mounted on a central rod.

It is found in the periplasm. The protein resides in the bacterial flagellum basal body. Its function is as follows. Assembles around the rod to form the L-ring and probably protects the motor/basal body from shearing forces during rotation. This is Flagellar P-ring protein from Xanthomonas oryzae pv. oryzae (strain MAFF 311018).